Here is a 130-residue protein sequence, read N- to C-terminus: Small ribosomal subunit protein uS8y (130 aa).

This sequence belongs to the universal ribosomal protein uS8 family.

The chain is Small ribosomal subunit protein uS8y (RPS15AC) from Arabidopsis thaliana (Mouse-ear cress).